We begin with the raw amino-acid sequence, 91 residues long: Alpha-defensin-related sequence 12 (91 aa).

Residues Met1–Ala19 form the signal peptide. Residues Asp20–Cys65 constitute a propeptide that is removed on maturation. A run of 6 repeats spans residues Cys65–Pro67, Cys68–Ser70, Cys71–Ser73, Cys74–Trp76, Cys77–Arg79, and Cys83–Met85. The segment at Cys65–Cys88 is 6 X 3 AA tandem repeats of C-P-X.

Belongs to the alpha-defensin family. As to expression, paneth cells of the small bowel.

The protein localises to the secreted. Functionally, apparent precursor of a secreted, cationic, proline- and cysteine-rich peptide that contains Cys-Pro-Xaa repeats. Unlike cryptdin, the proposed mature peptide region lacks the structural motif characteristic of defensins. It may have microbicidal activities. This is Alpha-defensin-related sequence 12 (Defa-rs12) from Mus musculus (Mouse).